A 913-amino-acid polypeptide reads, in one-letter code: Cadherin-4 (913 aa).

Residues 1-19 (MRTGSRLLLVLLVWGSAAA) form the signal peptide. Residues 20-166 (LNGDLTVRPT…SAKGLRRQKR (147 aa)) constitute a propeptide that is removed on maturation. Cadherin domains are found at residues 167–274 (DWVI…RPEF), 275–389 (INQV…PPEF), 390–504 (TTST…APYF), 505–610 (PTNH…DNAP), and 611–721 (ELLP…TIGA). At 167–731 (DWVIPPINVP…VAAAGLGTGA (565 aa)) the chain is on the extracellular side. 6 N-linked (GlcNAc...) asparagine glycosylation sites follow: asparagine 280, asparagine 409, asparagine 554, asparagine 629, asparagine 658, and asparagine 699. A helical membrane pass occupies residues 732–753 (IIAILICIIILLTMVLLFVVWM). Residues 754–913 (KRREKERHTK…ADMYGGGEED (160 aa)) lie on the Cytoplasmic side of the membrane.

In terms of tissue distribution, embryonic brain and neuronal retina.

It is found in the cell membrane. Functionally, cadherins are calcium-dependent cell adhesion proteins. They preferentially interact with themselves in a homophilic manner in connecting cells; cadherins may thus contribute to the sorting of heterogeneous cell types. May play an important role in retinal development. This chain is Cadherin-4 (CDH4), found in Gallus gallus (Chicken).